Reading from the N-terminus, the 46-residue chain is Large ribosomal subunit protein bL34c (46 aa).

This sequence belongs to the bacterial ribosomal protein bL34 family.

It is found in the plastid. The protein resides in the chloroplast. The polypeptide is Large ribosomal subunit protein bL34c (rpl34) (Guillardia theta (Cryptophyte)).